Reading from the N-terminus, the 436-residue chain is Prenyltransferase nscD (436 aa).

It belongs to the tryptophan dimethylallyltransferase family.

It participates in secondary metabolite biosynthesis. In terms of biological role, prenyltransferase; part of the gene cluster that mediates the biosynthesis of neosartoricin B, a prenylated anthracenone that probably exhibits T-cell antiproliferative activity, suggestive of a physiological role as an immunosuppressive agent. The non-reducing polyketide synthase nscA probably synthesizes and cyclizes the decaketide backbone. The hydrolase nscB then mediates the product release through hydrolysis followed by spontaneous decarboxylation. The prenyltransferase nscD catalyzes the addition of the dimethylallyl group to the aromatic C5. The FAD-dependent monooxygenase nscC is then responsible for the stereospecific hydroxylation at C2. Neosartoricin B can be converted into two additional compounds neosartoricins C and D. Neosartoricin C is a spirocyclic compound that is cyclized through the attack of C3 hydroxyl on C14, followed by dehydration. On the other hand, neosartoricin D is a further cyclized compound in which attack of C2 on C14 in neosartoricin C results in the formation of the acetal-containing dioxabicyclo-octanone ring. Both of these compounds are novel and possibly represent related metabolites of the gene cluster. This chain is Prenyltransferase nscD, found in Trichophyton rubrum (strain ATCC MYA-4607 / CBS 118892) (Athlete's foot fungus).